A 435-amino-acid polypeptide reads, in one-letter code: Transcription factor gkaF (435 aa).

Residues 1 to 19 are compositionally biased toward basic and acidic residues; it reads MGRPQRGDTAKERRERQDK. 3 disordered regions span residues 1 to 40, 115 to 158, and 231 to 257; these read MGRP…TVDW, STTA…SSQS, and FSSE…FLAP. Positions 28–40 are enriched in polar residues; it reads PISQSGLSDTVDW. A compositionally biased stretch (low complexity) spans 143–158; the sequence is SQSSDSSKPSSTSSQS.

Its subcellular location is the nucleus. Its function is as follows. Transcription factor; part of the gene cluster that mediates the biosynthesis of GKK1032, fungal natural products containing a macrocyclic para-cyclophane connected to a decahydrofluorene ring system that show potent antitumor activities. The chain is Transcription factor gkaF from Penicillium citrinum.